An 818-amino-acid chain; its full sequence is Cation/H(+) antiporter 6A (818 aa).

Transmembrane regions (helical) follow at residues 51 to 71 (NFWEYPLPNLEILIFSTFFIW), 88 to 110 (FTYMMIAGIILGQTCHFSNKSWI), 123 to 143 (VAETLGAFGFVLYWFLKGVTM), 156 to 176 (SVIGFITVIIPLICGSLTFRY), 192 to 212 (LIIFLQSISAFTSIDTLLKDL), 222 to 242 (IALSGAMVTDMLAFGVTFFNA), 248 to 268 (LYGFMQTVGFCLFVVVMICVV), 288 to 308 (FYLYSIFGIAFACFTFFNKVI), 310 to 330 (LFGPAGSFVFGLTVPNGYPLG), 340 to 360 (FNLGSILPLFGSLTMMQVDLL), 376 to 396 (IYEVISFILLVNTTKFVVTTI), 409 to 429 (FALALVLSNKGIFELAYYTYA), and 438 to 458 (EVFTILAAYTLLNSIFIPMLL).

This sequence belongs to the monovalent cation:proton antiporter 2 (CPA2) transporter (TC 2.A.37) family. CHX (TC 2.A.37.4) subfamily. As to expression, preferentially expressed in pollen.

The protein localises to the membrane. May operate as a cation/H(+) antiporter. The sequence is that of Cation/H(+) antiporter 6A (CHX6a) from Arabidopsis thaliana (Mouse-ear cress).